We begin with the raw amino-acid sequence, 449 residues long: Chromosomal replication initiator protein DnaA (449 aa).

The domain I, interacts with DnaA modulators stretch occupies residues 1-71; the sequence is MPSSLWKHCL…LLSHYSSGRI (71 aa). The domain II stretch occupies residues 71–112; the sequence is IEKALLEVGSCSLQPQPHIQAVELTSKSARSSSRVVDRIPES. Positions 113–329 are domain III, AAA+ region; that stretch reads RLNKNYTFDS…GALRRVIAYS (217 aa). 4 residues coordinate ATP: glycine 157, glycine 159, lysine 160, and threonine 161. Residues 330 to 449 form a domain IV, binds dsDNA region; the sequence is RFTHRPITME…YHNLLKKLST (120 aa).

Belongs to the DnaA family. Oligomerizes as a right-handed, spiral filament on DNA at oriC.

It is found in the cytoplasm. Plays an essential role in the initiation and regulation of chromosomal replication. ATP-DnaA binds to the origin of replication (oriC) to initiate formation of the DNA replication initiation complex once per cell cycle. Binds the DnaA box (a 9 base pair repeat at the origin) and separates the double-stranded (ds)DNA. Forms a right-handed helical filament on oriC DNA; dsDNA binds to the exterior of the filament while single-stranded (ss)DNA is stabiized in the filament's interior. The ATP-DnaA-oriC complex binds and stabilizes one strand of the AT-rich DNA unwinding element (DUE), permitting loading of DNA polymerase. After initiation quickly degrades to an ADP-DnaA complex that is not apt for DNA replication. Binds acidic phospholipids. The chain is Chromosomal replication initiator protein DnaA from Nitrosococcus oceani (strain ATCC 19707 / BCRC 17464 / JCM 30415 / NCIMB 11848 / C-107).